The primary structure comprises 204 residues: Thymidylate kinase (204 aa).

9–16 (GIEASGKT) provides a ligand contact to ATP.

This sequence belongs to the thymidylate kinase family.

The catalysed reaction is dTMP + ATP = dTDP + ADP. In terms of biological role, phosphorylation of dTMP to form dTDP in both de novo and salvage pathways of dTTP synthesis. The protein is Thymidylate kinase of Sulfurihydrogenibium sp. (strain YO3AOP1).